The sequence spans 132 residues: Small ribosomal subunit protein uS8 (132 aa).

This sequence belongs to the universal ribosomal protein uS8 family. In terms of assembly, part of the 30S ribosomal subunit. Contacts proteins S5 and S12.

Functionally, one of the primary rRNA binding proteins, it binds directly to 16S rRNA central domain where it helps coordinate assembly of the platform of the 30S subunit. This Rhizobium etli (strain CIAT 652) protein is Small ribosomal subunit protein uS8.